Reading from the N-terminus, the 384-residue chain is GDSL esterase/lipase At1g28670 (384 aa).

The first 24 residues, 1-24 (MASSLKKLISSFLLVLYSTTIIVA), serve as a signal peptide directing secretion. Catalysis depends on S42, which acts as the Nucleophile. 3 N-linked (GlcNAc...) asparagine glycosylation sites follow: N105, N138, and N321. Catalysis depends on residues D346 and H349.

The protein belongs to the 'GDSL' lipolytic enzyme family.

Its subcellular location is the secreted. This is GDSL esterase/lipase At1g28670 from Arabidopsis thaliana (Mouse-ear cress).